Consider the following 757-residue polypeptide: E3 ubiquitin-protein ligase SMURF1 (757 aa).

A C2 domain is found at 1 to 120 (MSNPGTRRNG…TGYQRLDLCK (120 aa)). A disordered region spans residues 193–237 (GNCRFVESPSQDQRLQAQRLRNPDVRGSLQTPQNRPHGHQSPELP). S200 is modified (phosphoserine). WW domains are found at residues 234 to 267 (PELP…DPRI) and 306 to 339 (GPLP…DPRL). Glycyl lysine isopeptide (Lys-Gly) (interchain with G-Cter in ubiquitin) cross-links involve residues K381 and K383. An HECT domain is found at 420–757 (RPKDLKKRLM…VEETCGFAVE (338 aa)). C725 serves as the catalytic Glycyl thioester intermediate.

As to quaternary structure, interacts with TRAF4. Interacts (via HECT domain) with FBXL15 (via LRR repeats). Interacts with SMAD7 and TGFBR1; SMAD7 recruits SMURF1 to TGFBR1 and regulates TGF-beta receptor degradation. Interacts with MAVS; the interaction is mediated by NDFIP1. Auto-ubiquitinated in presence of NDFIP1. Ubiquitinated by the SCF(FBXL15) complex at Lys-381 and Lys-383, leading to its degradation by the proteasome. Lys-383 is the primary ubiquitination site. Expressed in melanocytes.

It is found in the cytoplasm. The protein localises to the cell membrane. It catalyses the reaction S-ubiquitinyl-[E2 ubiquitin-conjugating enzyme]-L-cysteine + [acceptor protein]-L-lysine = [E2 ubiquitin-conjugating enzyme]-L-cysteine + N(6)-ubiquitinyl-[acceptor protein]-L-lysine.. It participates in protein modification; protein ubiquitination. In terms of biological role, E3 ubiquitin-protein ligase that acts as a negative regulator of BMP signaling pathway. Mediates ubiquitination and degradation of SMAD1 and SMAD5, 2 receptor-regulated SMADs specific for the BMP pathway. Promotes ubiquitination and subsequent proteasomal degradation of TRAF family members and RHOA. Promotes ubiquitination and subsequent proteasomal degradation of MAVS. Acts as an antagonist of TGF-beta signaling by ubiquitinating TGFBR1 and targeting it for degradation. Plays a role in dendrite formation by melanocytes. The protein is E3 ubiquitin-protein ligase SMURF1 (SMURF1) of Homo sapiens (Human).